Here is a 91-residue protein sequence, read N- to C-terminus: Potassium channel toxin Meg-beta-KTx1 (91 aa).

An N-terminal signal peptide occupies residues 1–19; that stretch reads MQRNLVVLLFLGMVALSSC. A propeptide spanning residues 20–27 is cleaved from the precursor; it reads GLREKHFQ. Residues 54 to 91 enclose the BetaSPN-type CS-alpha/beta domain; it reads QFGCPAYQGYCDDHCQDIKKQEGFCHGFKCKCGIPMGF. Disulfide bonds link Cys-57–Cys-78, Cys-64–Cys-83, and Cys-68–Cys-85.

Belongs to the long chain scorpion toxin family. Class 1 subfamily. In terms of tissue distribution, expressed by the venom gland.

The protein localises to the secreted. Its function is as follows. Inhibits voltage-gated potassium channel. This is Potassium channel toxin Meg-beta-KTx1 from Mesobuthus gibbosus (Mediterranean checkered scorpion).